A 117-amino-acid polypeptide reads, in one-letter code: Large ribosomal subunit protein uL18 (117 aa).

This sequence belongs to the universal ribosomal protein uL18 family. As to quaternary structure, part of the 50S ribosomal subunit; part of the 5S rRNA/L5/L18/L25 subcomplex. Contacts the 5S and 23S rRNAs.

Its function is as follows. This is one of the proteins that bind and probably mediate the attachment of the 5S RNA into the large ribosomal subunit, where it forms part of the central protuberance. In Halorhodospira halophila (strain DSM 244 / SL1) (Ectothiorhodospira halophila (strain DSM 244 / SL1)), this protein is Large ribosomal subunit protein uL18.